Here is a 223-residue protein sequence, read N- to C-terminus: Putative 3-methyladenine DNA glycosylase (223 aa).

The protein belongs to the DNA glycosylase MPG family.

This is Putative 3-methyladenine DNA glycosylase from Pseudomonas syringae pv. tomato (strain ATCC BAA-871 / DC3000).